The following is a 251-amino-acid chain: Malonyl-[acyl-carrier protein] O-methyltransferase (251 aa).

This sequence belongs to the methyltransferase superfamily.

It catalyses the reaction malonyl-[ACP] + S-adenosyl-L-methionine = malonyl-[ACP] methyl ester + S-adenosyl-L-homocysteine. Its pathway is cofactor biosynthesis; biotin biosynthesis. Converts the free carboxyl group of a malonyl-thioester to its methyl ester by transfer of a methyl group from S-adenosyl-L-methionine (SAM). It allows to synthesize pimeloyl-ACP via the fatty acid synthetic pathway. This chain is Malonyl-[acyl-carrier protein] O-methyltransferase, found in Salmonella typhimurium (strain LT2 / SGSC1412 / ATCC 700720).